Here is a 354-residue protein sequence, read N- to C-terminus: UDP-N-acetylglucosamine--N-acetylmuramyl-(pentapeptide) pyrophosphoryl-undecaprenol N-acetylglucosamine transferase (354 aa).

UDP-N-acetyl-alpha-D-glucosamine-binding positions include 15–17 (TGG), Asn-127, Arg-163, Ser-191, Ile-244, 263–268 (ALTVSE), and Gln-288.

The protein belongs to the glycosyltransferase 28 family. MurG subfamily.

The protein resides in the cell inner membrane. The catalysed reaction is di-trans,octa-cis-undecaprenyl diphospho-N-acetyl-alpha-D-muramoyl-L-alanyl-D-glutamyl-meso-2,6-diaminopimeloyl-D-alanyl-D-alanine + UDP-N-acetyl-alpha-D-glucosamine = di-trans,octa-cis-undecaprenyl diphospho-[N-acetyl-alpha-D-glucosaminyl-(1-&gt;4)]-N-acetyl-alpha-D-muramoyl-L-alanyl-D-glutamyl-meso-2,6-diaminopimeloyl-D-alanyl-D-alanine + UDP + H(+). It functions in the pathway cell wall biogenesis; peptidoglycan biosynthesis. In terms of biological role, cell wall formation. Catalyzes the transfer of a GlcNAc subunit on undecaprenyl-pyrophosphoryl-MurNAc-pentapeptide (lipid intermediate I) to form undecaprenyl-pyrophosphoryl-MurNAc-(pentapeptide)GlcNAc (lipid intermediate II). The polypeptide is UDP-N-acetylglucosamine--N-acetylmuramyl-(pentapeptide) pyrophosphoryl-undecaprenol N-acetylglucosamine transferase (Aliivibrio salmonicida (strain LFI1238) (Vibrio salmonicida (strain LFI1238))).